We begin with the raw amino-acid sequence, 204 residues long: TPR repeat-containing protein RHE_CH03534.1 (204 aa).

The first 29 residues, 1–29 (MSAMRLFALTSAMLPLAFILSTSPFPATA), serve as a signal peptide directing secretion. 3 TPR repeats span residues 84–117 (INLLMQWADKAIEEKRNPAALDFLDEAIALKPDY), 118–151 (AESWNRRATLNFVMGNYRKSMSDIEHVLNIEPRH), and 153–185 (GALSGMAAILSNSGNDQLTLKAWERFLDIYPAD).

In Rhizobium etli (strain ATCC 51251 / DSM 11541 / JCM 21823 / NBRC 15573 / CFN 42), this protein is TPR repeat-containing protein RHE_CH03534.1.